We begin with the raw amino-acid sequence, 71 residues long: MPSVKLKENEPFDFALRRFKRSCEKAGVLAEVRRREFYEKPTSVRKRKAAAAVKRHAKKVQRENRKFQRLY.

The span at 48–59 (KAAAAVKRHAKK) shows a compositional bias: basic residues. The segment at 48-71 (KAAAAVKRHAKKVQRENRKFQRLY) is disordered. Residues 60 to 71 (VQRENRKFQRLY) are compositionally biased toward basic and acidic residues.

It belongs to the bacterial ribosomal protein bS21 family.

The polypeptide is Small ribosomal subunit protein bS21 (Teredinibacter turnerae (strain ATCC 39867 / T7901)).